We begin with the raw amino-acid sequence, 1278 residues long: Sterol regulatory element-binding protein cleavage-activating protein (1278 aa).

Residues 1 to 18 are Cytoplasmic-facing; sequence MTLTERLREKISQAFYNH. A helical transmembrane segment spans residues 19-39; that stretch reads GLFCASYPIPIILFTGLCILA. The Lumenal segment spans residues 40–279; it reads CCYPLLKLPL…SLVHVHFKEE (240 aa). Residues 46 to 284 are loop-1; that stretch reads KLPLPGTGPV…HFKEEIGIAE (239 aa). The disordered stretch occupies residues 60 to 80; sequence PVKDYSPPPLTSDHKPGEPNE. Asparagine 263 is a glycosylation site (N-linked (GlcNAc...) asparagine). The chain crosses the membrane as a helical span at residues 280-300; that stretch reads IGIAELIPLVTTYIILFAYIY. In terms of domain architecture, SSD spans 284–442; sequence ELIPLVTTYI…MLFFTTVLSI (159 aa). Residues 301-312 lie on the Cytoplasmic side of the membrane; it reads FSTRKIDMVKSK. A helical transmembrane segment spans residues 313 to 333; sequence WGLALAAVVTVLSSLLMSVGL. The Lumenal portion of the chain corresponds to 334–344; it reads CTLFGLTPTLN. The chain crosses the membrane as a helical span at residues 345–365; sequence GGEIFPYLVVVIGLENVLVLT. Topologically, residues 366 to 401 are cytoplasmic; that stretch reads KSVVSTPVDLEVKLRIAQGLSSESWSIMKNMATELG. Residues 402–422 traverse the membrane as a helical segment; that stretch reads IVLIGYFTLVPAIQEFCLFAV. Residue valine 423 is a topological domain, lumenal. Residues 424–444 traverse the membrane as a helical segment; it reads GLVSDFFLQMLFFTTVLSIDI. Residues 445–518 lie on the Cytoplasmic side of the membrane; it reads RRMELADLNK…FLARTRLAQR (74 aa). The ER export signal signature appears at 447 to 452; it reads MELADL. Residues lysine 454 and lysine 466 each participate in a glycyl lysine isopeptide (Lys-Gly) (interchain with G-Cter in ubiquitin) cross-link. A helical transmembrane segment spans residues 519-539; that stretch reads LIMAGTVVWIGILVYTDPAGL. The segment at 535–710 is loop-7; the sequence is DPAGLRTYLA…QAQRDLTLYK (176 aa). The Lumenal portion of the chain corresponds to 540 to 707; it reads RTYLAAQVTE…GTAQAQRDLT (168 aa). Residues 581 to 618 are disordered; that stretch reads PPDASKLPENQTLPGEPPEPGGLAEGVHDSPAPEVTWG. 2 N-linked (GlcNAc...) asparagine glycosylation sites follow: asparagine 590 and asparagine 641. The segment at 668 to 696 is disordered; the sequence is EGRHPQDGRSAWPPPRPGQGGLWEAGPKG. A helical transmembrane segment spans residues 708-728; sequence LYKVAALGLASGIVLVLLLLC. The Cytoplasmic segment spans residues 729–1278; it reads LYRVLCPRNY…YVPSVLEKLD (550 aa). The segment at 731–1278 is interaction with SREBF2; it reads RVLCPRNYGQ…YVPSVLEKLD (548 aa). The WD 1 repeat unit spans residues 771-811; it reads VLRGHLMDIECLASDGMLLVSCCLAGHVCVWDAQTGDCLTR. Residues serine 821, serine 837, serine 850, serine 905, and serine 935 each carry the phosphoserine modification. The segment at 834–904 is disordered; it reads ERLSDGGKGG…RYRAGRRAQD (71 aa). WD repeat units lie at residues 951 to 1001 and 1004 to 1041; these read PPEK…LRCS and EVSSGITALVFLDRRIVAARLNGSLDFFSLETHTALSP. Arginine 1050 is modified (omega-N-methylarginine). 4 WD repeats span residues 1076-1113, 1116-1154, 1157-1194, and 1196-1234; these read AHQKPITALKAAAGRLVTGSQDHTLRVFRLEDSCCLFT, GHSGAITTVYIDQTMVLASGGQDGAICLWDVLTGSRVSH, AHRGDVTSLTCTTSCVISSGLDDLISIWDRSTGIKLYS, and QQDLGCGASLGVISDNLLVTGGQGCVSFWDLNYGDLLQT.

Belongs to the WD repeat SCAP family. As to quaternary structure, membrane region forms a homotetramer. Component of the SCAP-SREBP complex (composed of SCAP and SREBF1/SREBP1 or SREBF2/SREBP2); interacts with SREBF1/SREBP1 or SREBF2/SREBP2 through its C-terminal cytoplasmic domain. Forms a ternary complex with INSIG1 or INSIG2 through its transmembrane domains at high sterol concentrations. Interacts with PAQR3; the interaction anchors the SCAP-SREBP complex to the Golgi apparatus in low cholesterol conditions. Interacts with the SEC23-SEC24 complex in a SAR1-GTP-dependent manner through an ER export signal in its third cytoplasmic loop. Interacts with RNF139; the interaction inhibits the interaction of SCAP with SEC24B and hampering the ER to Golgi transport of the SCAP-SREBP complex. Interacts with SPRING1. Ubiquitinated at Lys-454 and Lys-466. RNF145 triggers ubiquitination of SCAP, likely inhibiting SCAP-SREBP complex transport to the Golgi apparatus and the subsequent processing/maturation of SREBF2/SREBP2.

It is found in the endoplasmic reticulum membrane. The protein localises to the golgi apparatus membrane. The protein resides in the cytoplasmic vesicle. It localises to the COPII-coated vesicle membrane. Its function is as follows. Escort protein required for cholesterol as well as lipid homeostasis. Regulates export of the SCAP-SREBP complex from the endoplasmic reticulum to the Golgi upon low cholesterol, thereby regulating the processing of sterol regulatory element-binding proteins (SREBPs) SREBF1/SREBP1 and SREBF2/SREBP2. At high sterol concentrations, formation of a ternary complex with INSIG (INSIG1 or INSIG2) leads to mask the ER export signal in SCAP, promoting retention of the complex in the endoplasmic reticulum. Low sterol concentrations trigger release of INSIG, a conformational change in the SSD domain of SCAP, unmasking of the ER export signal, promoting recruitment into COPII-coated vesicles and transport of the SCAP-SREBP to the Golgi: in the Golgi, SREBPs are then processed, releasing the transcription factor fragment of SREBPs from the membrane, its import into the nucleus and up-regulation of LDLR, INSIG1 and the mevalonate pathway. Binds cholesterol via its SSD domain. The sequence is that of Sterol regulatory element-binding protein cleavage-activating protein from Bos taurus (Bovine).